The sequence spans 171 residues: Adenine phosphoribosyltransferase (171 aa).

The protein belongs to the purine/pyrimidine phosphoribosyltransferase family. In terms of assembly, homodimer.

Its subcellular location is the cytoplasm. The enzyme catalyses AMP + diphosphate = 5-phospho-alpha-D-ribose 1-diphosphate + adenine. Its pathway is purine metabolism; AMP biosynthesis via salvage pathway; AMP from adenine: step 1/1. Functionally, catalyzes a salvage reaction resulting in the formation of AMP, that is energically less costly than de novo synthesis. The protein is Adenine phosphoribosyltransferase of Shouchella clausii (strain KSM-K16) (Alkalihalobacillus clausii).